The primary structure comprises 230 residues: Extracellular deoxyribonuclease (230 aa).

The signal sequence occupies residues 1–20 (MFRPLLSLCLALLVSAPAHA).

This sequence belongs to the EndA/NucM nuclease family.

It localises to the secreted. The polypeptide is Extracellular deoxyribonuclease (dns) (Aeromonas hydrophila).